A 100-amino-acid chain; its full sequence is Small ubiquitin-related modifier 1 (100 aa).

The region spanning E19–G96 is the Ubiquitin-like domain. A Glycyl lysine isopeptide (Gly-Lys) (interchain with K-? in acceptor proteins) cross-link involves residue G96. A propeptide spanning residues C97–D100 is cleaved from the precursor.

The protein belongs to the ubiquitin family. SUMO subfamily. Interacts with sae2, ube2i, ranbp2, pias1 and pias2. Covalently attached to a number of proteins. Post-translationally, cleavage of precursor form by a sentrin-specific protease is necessary for function.

The protein resides in the nucleus membrane. Its subcellular location is the nucleus speckle. It is found in the cytoplasm. The protein localises to the nucleus. It localises to the PML body. The protein resides in the cell membrane. Functionally, ubiquitin-like protein that can be covalently attached to proteins as a monomer or a lysine-linked polymer. Covalent attachment via an isopeptide bond to its substrates requires prior activation by the E1 complex sae1-sae2 and linkage to the E2 enzyme ube2i. This post-translational modification on lysine residues of proteins plays a crucial role in a number of cellular processes such as nuclear transport, DNA replication and repair, mitosis and signal transduction. Polymeric sumo1 chains are also susceptible to polyubiquitination which functions as a signal for proteasomal degradation of modified proteins. In Danio rerio (Zebrafish), this protein is Small ubiquitin-related modifier 1 (sumo1).